Here is a 252-residue protein sequence, read N- to C-terminus: 2-succinyl-6-hydroxy-2,4-cyclohexadiene-1-carboxylate synthase (252 aa).

It belongs to the AB hydrolase superfamily. MenH family. Monomer.

It carries out the reaction 5-enolpyruvoyl-6-hydroxy-2-succinyl-cyclohex-3-ene-1-carboxylate = (1R,6R)-6-hydroxy-2-succinyl-cyclohexa-2,4-diene-1-carboxylate + pyruvate. It participates in quinol/quinone metabolism; 1,4-dihydroxy-2-naphthoate biosynthesis; 1,4-dihydroxy-2-naphthoate from chorismate: step 3/7. Its pathway is quinol/quinone metabolism; menaquinone biosynthesis. In terms of biological role, catalyzes a proton abstraction reaction that results in 2,5-elimination of pyruvate from 2-succinyl-5-enolpyruvyl-6-hydroxy-3-cyclohexene-1-carboxylate (SEPHCHC) and the formation of 2-succinyl-6-hydroxy-2,4-cyclohexadiene-1-carboxylate (SHCHC). This Escherichia coli O157:H7 protein is 2-succinyl-6-hydroxy-2,4-cyclohexadiene-1-carboxylate synthase.